A 60-amino-acid polypeptide reads, in one-letter code: Cytochrome c oxidase subunit 9, mitochondrial (60 aa).

Residues 1–15 (MSAIAPITGTIRKRI) are Mitochondrial matrix-facing. Residues 16–38 (LADITIGFAIGGAMASYWWWGFH) traverse the membrane as a helical segment. Over 39-57 (KNIINKREAYYAKLAEQKA) the chain is Mitochondrial intermembrane. The propeptide at 58-60 (AEN) is removed in mature form.

Belongs to the fungal cytochrome c oxidase subunit 7a family. As to quaternary structure, component of the cytochrome c oxidase (complex IV, CIV), a multisubunit enzyme composed of a catalytic core of 3 subunits and several supernumerary subunits. The complex exists as a monomer or a dimer and forms supercomplexes (SCs) in the inner mitochondrial membrane with ubiquinol-cytochrome c oxidoreductase (cytochrome b-c1 complex, complex III, CIII).

It localises to the mitochondrion inner membrane. It participates in energy metabolism; oxidative phosphorylation. Component of the cytochrome c oxidase, the last enzyme in the mitochondrial electron transport chain which drives oxidative phosphorylation. The respiratory chain contains 3 multisubunit complexes succinate dehydrogenase (complex II, CII), ubiquinol-cytochrome c oxidoreductase (cytochrome b-c1 complex, complex III, CIII) and cytochrome c oxidase (complex IV, CIV), that cooperate to transfer electrons derived from NADH and succinate to molecular oxygen, creating an electrochemical gradient over the inner membrane that drives transmembrane transport and the ATP synthase. Cytochrome c oxidase is the component of the respiratory chain that catalyzes the reduction of oxygen to water. Electrons originating from reduced cytochrome c in the intermembrane space (IMS) are transferred via the dinuclear copper A center (CU(A)) of subunit 2 and heme A of subunit 1 to the active site in subunit 1, a binuclear center (BNC) formed by heme A3 and copper B (CU(B)). The BNC reduces molecular oxygen to 2 water molecules using 4 electrons from cytochrome c in the IMS and 4 protons from the mitochondrial matrix. This chain is Cytochrome c oxidase subunit 9, mitochondrial (COX9), found in Kluyveromyces lactis (strain ATCC 8585 / CBS 2359 / DSM 70799 / NBRC 1267 / NRRL Y-1140 / WM37) (Yeast).